The chain runs to 131 residues: Photosystem II extrinsic protein U (131 aa).

An N-terminal signal peptide occupies residues 1-28; sequence MKFISRLLVACSLLIGLMGFLGADLAQA. A propeptide spanning residues 29-36 is cleaved from the precursor; it reads LTPNPILA.

Belongs to the PsbU family. In terms of assembly, PSII is composed of 1 copy each of membrane proteins PsbA, PsbB, PsbC, PsbD, PsbE, PsbF, PsbH, PsbI, PsbJ, PsbK, PsbL, PsbM, PsbT, PsbX, PsbY, PsbZ, Psb30/Ycf12, peripheral proteins PsbO, CyanoQ (PsbQ), PsbU, PsbV and a large number of cofactors. It forms dimeric complexes.

The protein localises to the cellular thylakoid membrane. One of the extrinsic, lumenal subunits of photosystem II (PSII). PSII is a light-driven water plastoquinone oxidoreductase, using light energy to abstract electrons from H(2)O, generating a proton gradient subsequently used for ATP formation. The extrinsic proteins stabilize the structure of photosystem II oxygen-evolving complex (OEC), the ion environment of oxygen evolution and protect the OEC against heat-induced inactivation. May modulate the Cl(-) requirement for oxygen evolution. In Synechocystis sp. (strain ATCC 27184 / PCC 6803 / Kazusa), this protein is Photosystem II extrinsic protein U.